Reading from the N-terminus, the 575-residue chain is MNTKGKVVGVNGNLVTIEVEGSVFMNEVLFVKTAGRNLKAEVIRIRGNEVDAQVFELTKGISVGDLVEFTDKLLTVELGPGLLTQVYDGLQNPLPELAIQCGFFLERGVYLRPLNKDKKWNFKKTSKVGDIVIAGDFLGFVIEGTVHHQIMIPFYKRDSYKIVEIVSDGDYSIDEQIAVIEDDSGMRHNITMSFHWPVKVPITNYKERLIPSEPMLTQTRIIDTFFPVAKGGTFCIPGPFGAGKTVLQQVTSRNADVDVVIIAACGERAGEVVETLKEFPELMDPKTGKSLMDRTCIICNTSSMPVAAREASVYTAITIGEYYRQMGLDILLLADSTSRWAQAMREMSGRLEEIPGEEAFPAYLESVIASFYERAGIVVLNNGDIGSVTVGGSVSPAGGNFEEPVTQATLKVVGAFHGLTRERSDARKFPAISPLESWSKYKGVIDQKKTEYARSFLVKGNEINQMMKVVGEEGISNDDFLIYLKSELLDSCYLQQNSFDSIDAAVSSERQNYMFDIVYNILKTNFEFSDKLQARDFINELRQNLLDMNLSSFKDHKFNKLEHALGELINFKKVI.

238 to 245 (GPFGAGKT) contributes to the ATP binding site.

It belongs to the ATPase alpha/beta chains family.

The enzyme catalyses ATP + H2O + 4 H(+)(in) = ADP + phosphate + 5 H(+)(out). Produces ATP from ADP in the presence of a proton gradient across the membrane. The V-type alpha chain is a catalytic subunit. This Borreliella burgdorferi (strain ZS7) (Borrelia burgdorferi) protein is V-type ATP synthase alpha chain.